The following is a 514-amino-acid chain: 2,3-bisphosphoglycerate-independent phosphoglycerate mutase (514 aa).

Residues aspartate 14 and serine 64 each coordinate Mn(2+). Residue serine 64 is the Phosphoserine intermediate of the active site. Residues histidine 125, 155–156, arginine 187, arginine 193, 263–266, and lysine 336 contribute to the substrate site; these read RD and RADR. Residues aspartate 403, histidine 407, aspartate 444, histidine 445, and histidine 463 each contribute to the Mn(2+) site.

The protein belongs to the BPG-independent phosphoglycerate mutase family. As to quaternary structure, monomer. The cofactor is Mn(2+).

The enzyme catalyses (2R)-2-phosphoglycerate = (2R)-3-phosphoglycerate. The protein operates within carbohydrate degradation; glycolysis; pyruvate from D-glyceraldehyde 3-phosphate: step 3/5. Its function is as follows. Catalyzes the interconversion of 2-phosphoglycerate and 3-phosphoglycerate. The sequence is that of 2,3-bisphosphoglycerate-independent phosphoglycerate mutase from Escherichia coli O1:K1 / APEC.